We begin with the raw amino-acid sequence, 256 residues long: RNA polymerase sigma factor SigI1 (256 aa).

The short motif at 67 to 80 is the Polymerase core binding element; it reads DEFSIALSAFNEAI. Positions 205-224 form a DNA-binding region, H-T-H motif; that stretch reads RNELKKKAKVHGRTIGNNRK.

This sequence belongs to the sigma-70 factor family. SigI subfamily. In terms of assembly, interacts with RsgI1.

It is found in the cytoplasm. Its activity is regulated as follows. Negatively regulated by the anti-sigma-I factor RsgI1. Binding of the polysaccharide substrate to RsgI1 may lead to the release and activation of SigI1. In terms of biological role, sigma factors are initiation factors that promote the attachment of RNA polymerase to specific initiation sites and are then released. This sigma factor is involved in regulation of cellulosomal genes via an external polysaccharide-sensing mechanism. SigI1 promotes transcription from sigI1 and celS promoters. The polypeptide is RNA polymerase sigma factor SigI1 (Acetivibrio thermocellus (strain ATCC 27405 / DSM 1237 / JCM 9322 / NBRC 103400 / NCIMB 10682 / NRRL B-4536 / VPI 7372) (Clostridium thermocellum)).